A 91-amino-acid chain; its full sequence is UPF0250 protein PputW619_0619 (91 aa).

It belongs to the UPF0250 family.

The protein is UPF0250 protein PputW619_0619 of Pseudomonas putida (strain W619).